Reading from the N-terminus, the 158-residue chain is NADH-quinone oxidoreductase subunit B (158 aa).

The [4Fe-4S] cluster site is built by C37, C38, C102, and C132.

The protein belongs to the complex I 20 kDa subunit family. NDH-1 is composed of 14 different subunits. Subunits NuoB, C, D, E, F, and G constitute the peripheral sector of the complex. Requires [4Fe-4S] cluster as cofactor.

It is found in the cell inner membrane. The catalysed reaction is a quinone + NADH + 5 H(+)(in) = a quinol + NAD(+) + 4 H(+)(out). In terms of biological role, NDH-1 shuttles electrons from NADH, via FMN and iron-sulfur (Fe-S) centers, to quinones in the respiratory chain. Couples the redox reaction to proton translocation (for every two electrons transferred, four hydrogen ions are translocated across the cytoplasmic membrane), and thus conserves the redox energy in a proton gradient. The sequence is that of NADH-quinone oxidoreductase subunit B from Nitrosomonas europaea (strain ATCC 19718 / CIP 103999 / KCTC 2705 / NBRC 14298).